The following is a 194-amino-acid chain: Glycerol-3-phosphate acyltransferase (194 aa).

6 helical membrane passes run 3 to 23 (AGLF…GLLL), 52 to 72 (VGIL…LLAW), 80 to 100 (MQAW…FLLF), 112 to 132 (VFLA…ILLV), 135 to 155 (WRYI…IIFF), and 162 to 182 (LLIA…SNIS).

The protein belongs to the PlsY family. Probably interacts with PlsX.

It is found in the cell inner membrane. It catalyses the reaction an acyl phosphate + sn-glycerol 3-phosphate = a 1-acyl-sn-glycero-3-phosphate + phosphate. It participates in lipid metabolism; phospholipid metabolism. Catalyzes the transfer of an acyl group from acyl-phosphate (acyl-PO(4)) to glycerol-3-phosphate (G3P) to form lysophosphatidic acid (LPA). This enzyme utilizes acyl-phosphate as fatty acyl donor, but not acyl-CoA or acyl-ACP. The sequence is that of Glycerol-3-phosphate acyltransferase from Trichlorobacter lovleyi (strain ATCC BAA-1151 / DSM 17278 / SZ) (Geobacter lovleyi).